A 499-amino-acid chain; its full sequence is 3-beta-hydroxylase (499 aa).

The helical; Signal-anchor for type II membrane protein transmembrane segment at 2–22 (FSSFETLILSFVSLFFMMIFI) threads the bilayer. Cysteine 441 contacts heme.

It belongs to the cytochrome P450 family. Heme is required as a cofactor.

Its subcellular location is the membrane. It catalyses the reaction (+)-costunolide + reduced [NADPH--hemoprotein reductase] + O2 = 3beta-hydroxycostunolide + oxidized [NADPH--hemoprotein reductase] + H2O + H(+). It carries out the reaction parthenolide + reduced [NADPH--hemoprotein reductase] + O2 = 3beta-hydroxyparthenolide + oxidized [NADPH--hemoprotein reductase] + H2O + H(+). Its pathway is secondary metabolite biosynthesis; terpenoid biosynthesis. Functionally, involved in the biosynthesis of germacrene-derived sesquiterpene lactones. Component of the parthenolide biosynthetic pathway; parthenolide and conjugates are promising anti-cancer drugs highly active against colon cancer cells. Catalyzes the conversion of costunolide and parthenolide to 3-beta-hydroxycostunolide and 3-beta-hydroxyparthenolide, respectively. The chain is 3-beta-hydroxylase from Tanacetum parthenium (Feverfew).